Consider the following 2278-residue polypeptide: Genome polyprotein (2278 aa).

In terms of domain architecture, SF3 helicase spans 454-609 (LESTANSIRS…EDWKKKNPGK (156 aa)). ATP is bound at residue 481 to 488 (GPPGIGKT). The segment at 939 to 958 (EEAKGKTKHGRGAKHARRGG) is disordered. A compositionally biased stretch (basic residues) spans 944–956 (KTKHGRGAKHARR). Tyr966 is modified (O-(5'-phospho-RNA)-tyrosine). Residues 1056–1204 (APTPIVTFTS…TKLAQRVTKT (149 aa)) enclose the Peptidase C24 domain. Residues His1086, Glu1107, and Cys1171 each act as for 3CLpro activity in the active site. Positions 1443–1568 (GVLYCLDYSK…SVCPATASIF (126 aa)) constitute a RdRp catalytic domain.

Homodimer. Homomultimer. In terms of processing, specific enzymatic cleavages in vivo yield mature proteins. Pro-Pol is first autocatalytically cleaved, then processes the whole polyprotein. VPg is uridylylated by the polymerase and is covalently attached to the 5'-end of the polyadenylated genomic and subgenomic RNAs. This uridylylated form acts as a nucleotide-peptide primer for the polymerase.

Its subcellular location is the virion. The protein localises to the host cytoplasm. It catalyses the reaction a ribonucleoside 5'-triphosphate + H2O = a ribonucleoside 5'-diphosphate + phosphate + H(+). The catalysed reaction is RNA(n) + a ribonucleoside 5'-triphosphate = RNA(n+1) + diphosphate. It carries out the reaction Endopeptidase with a preference for cleavage when the P1 position is occupied by Glu-|-Xaa and the P1' position is occupied by Gly-|-Yaa.. In terms of biological role, together with NTPase and NS4, initiates the formation of the replication complex. Induces the proliferation of the host smooth ER membranes forming long tubular structures. These remodeled membranes probably form the viral factories that contain the replication complex. Functionally, displays NTPase activity, but no helicase activity. Induces the formation of convoluted membranes derived from the host ER. These remodeled membranes probably form the viral factories that contain the replication complex. Together with NS2 and NS4, initiates the formation of the replication complex. Its function is as follows. Probable key protein responsible for the formation of membrane alterations by the virus. Induces the formation of convoluted membranes derived from the host ER. These remodeled membranes probably form the viral factories that contain the replication complex. Together with NS2 and NTPase, initiates the formation of the replication complex. Viral genome-linked protein is covalently linked to the 5'-end of the positive-strand, negative-strand genomic RNAs and subgenomic RNA. Acts as a genome-linked replication primer. May recruit ribosome to viral RNA thereby promoting viral proteins translation. Interacts with host translation initiation complex to allow the translation of viral proteins. In terms of biological role, protease-polymerase p76 processes the polyprotein: Pro-Pol is first released by autocleavage, then all other proteins are cleaved. Cleaves host translation initiation factor eIF4G1, eIF4G2 and PABP1 thereby inducing a shutdown of host protein synthesis. This shutdown may not prevent viral mRNA from being translated since viral Vpg replaces the cap. It is also an RNA-directed RNA polymerase which replicates genomic and antigenomic viral RNA by recognizing specific signals. Also transcribes a subgenomic mRNA by initiating RNA synthesis internally on antigenomic RNA. This sgRNA codes for structural proteins. Catalyzes the covalent attachment VPg with viral RNAs. Functionally, capsid protein self assembles to form an icosahedral capsid with a T=3 symmetry, about 38 nm in diameter, and consisting of 180 capsid proteins. The capsid encapsulate the genomic RNA and VP2 proteins. Attaches virion to target cells, inducing endocytosis of the viral particle. Acidification of the endosome induces conformational change of capsid protein thereby injecting virus genomic RNA into host cytoplasm. The protein is Genome polyprotein of Homo sapiens (Human).